Here is a 425-residue protein sequence, read N- to C-terminus: Histidine--tRNA ligase (425 aa).

It belongs to the class-II aminoacyl-tRNA synthetase family. As to quaternary structure, homodimer.

It is found in the cytoplasm. The enzyme catalyses tRNA(His) + L-histidine + ATP = L-histidyl-tRNA(His) + AMP + diphosphate + H(+). This is Histidine--tRNA ligase from Listeria innocua serovar 6a (strain ATCC BAA-680 / CLIP 11262).